The primary structure comprises 226 residues: 2-C-methyl-D-erythritol 4-phosphate cytidylyltransferase (226 aa).

Belongs to the IspD/TarI cytidylyltransferase family. IspD subfamily.

The catalysed reaction is 2-C-methyl-D-erythritol 4-phosphate + CTP + H(+) = 4-CDP-2-C-methyl-D-erythritol + diphosphate. Its pathway is isoprenoid biosynthesis; isopentenyl diphosphate biosynthesis via DXP pathway; isopentenyl diphosphate from 1-deoxy-D-xylulose 5-phosphate: step 2/6. In terms of biological role, catalyzes the formation of 4-diphosphocytidyl-2-C-methyl-D-erythritol from CTP and 2-C-methyl-D-erythritol 4-phosphate (MEP). In Clostridium beijerinckii (strain ATCC 51743 / NCIMB 8052) (Clostridium acetobutylicum), this protein is 2-C-methyl-D-erythritol 4-phosphate cytidylyltransferase.